The primary structure comprises 267 residues: 4-hydroxy-tetrahydrodipicolinate reductase (267 aa).

Position 10–15 (10–15 (GCLGKQ)) interacts with NAD(+). Residue Arg-37 participates in NADP(+) binding. NAD(+) contacts are provided by residues 99-101 (GTT) and 122-125 (TTNV). Catalysis depends on His-154, which acts as the Proton donor/acceptor. His-155 is a binding site for (S)-2,3,4,5-tetrahydrodipicolinate. Catalysis depends on Lys-158, which acts as the Proton donor. 164–165 (GT) provides a ligand contact to (S)-2,3,4,5-tetrahydrodipicolinate.

Belongs to the DapB family.

It is found in the cytoplasm. It catalyses the reaction (S)-2,3,4,5-tetrahydrodipicolinate + NAD(+) + H2O = (2S,4S)-4-hydroxy-2,3,4,5-tetrahydrodipicolinate + NADH + H(+). The catalysed reaction is (S)-2,3,4,5-tetrahydrodipicolinate + NADP(+) + H2O = (2S,4S)-4-hydroxy-2,3,4,5-tetrahydrodipicolinate + NADPH + H(+). Its pathway is amino-acid biosynthesis; L-lysine biosynthesis via DAP pathway; (S)-tetrahydrodipicolinate from L-aspartate: step 4/4. Its function is as follows. Catalyzes the conversion of 4-hydroxy-tetrahydrodipicolinate (HTPA) to tetrahydrodipicolinate. The sequence is that of 4-hydroxy-tetrahydrodipicolinate reductase from Ehrlichia canis (strain Jake).